The sequence spans 221 residues: Putative NAD(P)H nitroreductase YfkO (221 aa).

Residues 15–17 (RHA) and 73–75 (QKQ) each bind FMN. 157 to 162 (AAAQIG) lines the NAD(+) pocket. FMN contacts are provided by residues 169-170 (EG) and R211.

It belongs to the nitroreductase family. As to quaternary structure, monomer. It depends on FMN as a cofactor.

The protein is Putative NAD(P)H nitroreductase YfkO (yfkO) of Bacillus subtilis (strain 168).